A 451-amino-acid chain; its full sequence is Tryptophan--tRNA ligase (451 aa).

ATP contacts are provided by residues 10–12 (TTT) and 18–19 (GN). Positions 11–19 (TTGTPHLGN) match the 'HIGH' region motif. Asp143 is a binding site for L-tryptophan. Residues 155–157 (GRD), Leu195, and 202–206 (KMSKS) each bind ATP. The short motif at 202 to 206 (KMSKS) is the 'KMSKS' region element.

This sequence belongs to the class-I aminoacyl-tRNA synthetase family. In terms of assembly, homodimer.

It localises to the cytoplasm. The enzyme catalyses tRNA(Trp) + L-tryptophan + ATP = L-tryptophyl-tRNA(Trp) + AMP + diphosphate + H(+). Functionally, catalyzes the attachment of tryptophan to tRNA(Trp). This Bordetella pertussis (strain Tohama I / ATCC BAA-589 / NCTC 13251) protein is Tryptophan--tRNA ligase.